We begin with the raw amino-acid sequence, 380 residues long: DNA replication and repair protein RecF (380 aa).

30–37 lines the ATP pocket; the sequence is GPNGFGKT.

Belongs to the RecF family.

It is found in the cytoplasm. The RecF protein is involved in DNA metabolism; it is required for DNA replication and normal SOS inducibility. RecF binds preferentially to single-stranded, linear DNA. It also seems to bind ATP. The polypeptide is DNA replication and repair protein RecF (Mycobacterium sp. (strain JLS)).